Reading from the N-terminus, the 90-residue chain is U-scoloptoxin(15)-Sa3a (90 aa).

Positions 1–18 (MKMVYLGLFLIITSCVIS) are cleaved as a signal peptide.

It belongs to the scoloptoxin-15 family. Post-translationally, contains 3 disulfide bonds. As to expression, expressed by the venom gland.

Its subcellular location is the secreted. The protein is U-scoloptoxin(15)-Sa3a of Scolopendra alternans (Florida Keys giant centipede).